Reading from the N-terminus, the 404-residue chain is uncharacterized protein (404 aa).

Residues 1 to 22 (MASSINNSSQPTVPSISNNSHG) are compositionally biased toward polar residues. Positions 1–110 (MASSINNSSQ…QQTPVKRRRR (110 aa)) are disordered. A Phosphothreonine modification is found at threonine 47. The span at 87–104 (SRGSSLKSHLETESQQTP) shows a compositional bias: polar residues. The segment at 117 to 166 (VDYCSACGGRGLFICCEGCPCSFHLSCLEPPLTPENIPEGSWFCVTCSIK) adopts a PHD-type zinc-finger fold.

This is an uncharacterized protein from Schizosaccharomyces pombe (strain 972 / ATCC 24843) (Fission yeast).